We begin with the raw amino-acid sequence, 143 residues long: Actin-depolymerizing factor (143 aa).

Positions 11–143 constitute an ADF-H domain; that stretch reads GMGVADHSKN…DLEVLRERAH (133 aa).

It belongs to the actin-binding proteins ADF family.

Its function is as follows. Actin-depolymerizing protein. Severs actin filaments (F-actin) and binds to actin monomers. This is Actin-depolymerizing factor from Vitis vinifera (Grape).